A 430-amino-acid polypeptide reads, in one-letter code: Tol-Pal system protein TolB (430 aa).

The signal sequence occupies residues 1–21 (MKQAFRVALGFFLLWASVLHA).

This sequence belongs to the TolB family. The Tol-Pal system is composed of five core proteins: the inner membrane proteins TolA, TolQ and TolR, the periplasmic protein TolB and the outer membrane protein Pal. They form a network linking the inner and outer membranes and the peptidoglycan layer.

The protein resides in the periplasm. Functionally, part of the Tol-Pal system, which plays a role in outer membrane invagination during cell division and is important for maintaining outer membrane integrity. TolB occupies a key intermediary position in the Tol-Pal system because it communicates directly with both membrane-embedded components, Pal in the outer membrane and TolA in the inner membrane. The polypeptide is Tol-Pal system protein TolB (Sodalis glossinidius (strain morsitans)).